Here is a 265-residue protein sequence, read N- to C-terminus: MNRLYPHPIIAREGWPIIGGGLALSLLVSICCGWWSLPFWVFTVFALQFFRDPAREIPLNPEAVLSPVDGRIVVVERARDPYRDVDALKISIFMNVFNVHSQKSPADCTVTKVVYNKGKFVNADLDKASTENERNAVLATTASGREITFVQVAGLVARRILCYTQAGAKLSRGERYGFIRFGSRVDMYLPVDAQAQVAIGDKVTGVSTVLARLPLTAPQTESEPESEPALQTAPVETAANPSAEQRQIEAAAAKIQAAVQDVLKD.

The active-site Schiff-base intermediate with substrate; via pyruvic acid is the Ser-183. Ser-183 carries the post-translational modification Pyruvic acid (Ser); by autocatalysis. The segment at 216–246 is disordered; the sequence is TAPQTESEPESEPALQTAPVETAANPSAEQR.

It belongs to the phosphatidylserine decarboxylase family. PSD-A subfamily. Heterodimer of a large membrane-associated beta subunit and a small pyruvoyl-containing alpha subunit. Pyruvate is required as a cofactor. In terms of processing, is synthesized initially as an inactive proenzyme. Formation of the active enzyme involves a self-maturation process in which the active site pyruvoyl group is generated from an internal serine residue via an autocatalytic post-translational modification. Two non-identical subunits are generated from the proenzyme in this reaction, and the pyruvate is formed at the N-terminus of the alpha chain, which is derived from the carboxyl end of the proenzyme. The post-translation cleavage follows an unusual pathway, termed non-hydrolytic serinolysis, in which the side chain hydroxyl group of the serine supplies its oxygen atom to form the C-terminus of the beta chain, while the remainder of the serine residue undergoes an oxidative deamination to produce ammonia and the pyruvoyl prosthetic group on the alpha chain.

It localises to the cell membrane. It catalyses the reaction a 1,2-diacyl-sn-glycero-3-phospho-L-serine + H(+) = a 1,2-diacyl-sn-glycero-3-phosphoethanolamine + CO2. It participates in phospholipid metabolism; phosphatidylethanolamine biosynthesis; phosphatidylethanolamine from CDP-diacylglycerol: step 2/2. Catalyzes the formation of phosphatidylethanolamine (PtdEtn) from phosphatidylserine (PtdSer). This chain is Phosphatidylserine decarboxylase proenzyme, found in Neisseria meningitidis serogroup B (strain ATCC BAA-335 / MC58).